The sequence spans 403 residues: Zinc metalloproteinase nas-8 (403 aa).

The signal sequence occupies residues 1 to 29 (MRRNDLLNNKITIFLSSLSLFVIIIPIYA). Residues 30-111 (AEKDLLPPST…DPKNSESLRR (82 aa)) constitute a propeptide that is removed on maturation. Residues 112 to 307 (NGVITGTRKW…LKMNLMYQCS (196 aa)) enclose the Peptidase M12A domain. 5 disulfides stabilise this stretch: cysteine 154–cysteine 306, cysteine 176–cysteine 195, cysteine 338–cysteine 372, cysteine 345–cysteine 365, and cysteine 352–cysteine 369. Residue histidine 203 participates in Zn(2+) binding. The active site involves glutamate 204. Zn(2+) is bound by residues histidine 207 and histidine 213. Residues 338–372 (CRDRTNLCWRWIDRCKSFFFEQIMKEFCSLSCGYC) enclose the ShKT domain. N-linked (GlcNAc...) asparagine glycosylation occurs at asparagine 386.

Zn(2+) is required as a cofactor.

It is found in the secreted. The enzyme catalyses Hydrolysis of peptide bonds in substrates containing five or more amino acids, preferentially with Ala in P1', and Pro in P2'.. Its function is as follows. Metalloprotease. The polypeptide is Zinc metalloproteinase nas-8 (nas-8) (Caenorhabditis elegans).